Consider the following 358-residue polypeptide: DNA polymerase IV (358 aa).

Positions 4-185 constitute a UmuC domain; it reads IIHVDMDCFY…LPLIKIPGVG (182 aa). Residues aspartate 8 and aspartate 103 each coordinate Mg(2+). Residue glutamate 104 is part of the active site.

It belongs to the DNA polymerase type-Y family. As to quaternary structure, monomer. It depends on Mg(2+) as a cofactor.

The protein resides in the cytoplasm. It catalyses the reaction DNA(n) + a 2'-deoxyribonucleoside 5'-triphosphate = DNA(n+1) + diphosphate. In terms of biological role, poorly processive, error-prone DNA polymerase involved in untargeted mutagenesis. Copies undamaged DNA at stalled replication forks, which arise in vivo from mismatched or misaligned primer ends. These misaligned primers can be extended by PolIV. Exhibits no 3'-5' exonuclease (proofreading) activity. May be involved in translesional synthesis, in conjunction with the beta clamp from PolIII. The sequence is that of DNA polymerase IV from Shewanella halifaxensis (strain HAW-EB4).